The chain runs to 519 residues: Pleckstrin homology domain-containing family A member 8 (519 aa).

The PH domain maps to 1–93 (MEGVLYKWTN…WLVALGSAKA (93 aa)). Position 139 is a phosphothreonine (threonine 139). Serine 145 is modified (phosphoserine). Threonine 153 carries the phosphothreonine modification. The disordered stretch occupies residues 274–302 (GEDNLGNHDSSLAQPASDSSSSPPESHWE). Residues 282–298 (DSSLAQPASDSSSSPPE) show a composition bias toward low complexity. Residues 310 to 519 (TFFSTMNTSF…VHGLESDEVV (210 aa)) are glycolipid transfer protein homology domain.

In terms of assembly, homodimer. Interacts with ARF1; the interaction together with phosphatidylinositol 4-phosphate binding is required for FAPP2 GlcCer transfer ability.

It localises to the golgi apparatus. The protein resides in the trans-Golgi network membrane. The protein localises to the membrane. Its function is as follows. Cargo transport protein that is required for apical transport from the trans-Golgi network (TGN). Transports AQP2 from the trans-Golgi network (TGN) to sites of AQP2 phosphorylation. Mediates the non-vesicular transport of glucosylceramide (GlcCer) from the trans-Golgi network (TGN) to the plasma membrane and plays a pivotal role in the synthesis of complex glycosphingolipids. Binding of both phosphatidylinositol 4-phosphate (PIP) and ARF1 are essential for the GlcCer transfer ability. Also required for primary cilium formation, possibly by being involved in the transport of raft lipids to the apical membrane, and for membrane tubulation. This Canis lupus familiaris (Dog) protein is Pleckstrin homology domain-containing family A member 8 (PLEKHA8).